Reading from the N-terminus, the 293-residue chain is Nitrogenase iron protein (293 aa).

An ATP-binding site is contributed by 10-17; the sequence is GKGGIGKS. Cys98 contributes to the [4Fe-4S] cluster binding site. The residue at position 101 (Arg101) is an ADP-ribosylarginine; by dinitrogenase reductase ADP-ribosyltransferase. Position 133 (Cys133) interacts with [4Fe-4S] cluster.

The protein belongs to the NifH/BchL/ChlL family. Homodimer. It depends on [4Fe-4S] cluster as a cofactor. In terms of processing, the reversible ADP-ribosylation of Arg-101 inactivates the nitrogenase reductase and regulates nitrogenase activity.

It catalyses the reaction N2 + 8 reduced [2Fe-2S]-[ferredoxin] + 16 ATP + 16 H2O = H2 + 8 oxidized [2Fe-2S]-[ferredoxin] + 2 NH4(+) + 16 ADP + 16 phosphate + 6 H(+). Its function is as follows. The key enzymatic reactions in nitrogen fixation are catalyzed by the nitrogenase complex, which has 2 components: the iron protein and the molybdenum-iron protein. This is Nitrogenase iron protein from Stutzerimonas stutzeri (strain A1501) (Pseudomonas stutzeri).